Consider the following 453-residue polypeptide: MARKVVSRKRKAPASPGAGSDAQGPQFGWDHSLHKRKRLPPVKRSLVYYLKNREVRLQNETSYSRVLHGYAAQQLPSLLKEREFHLGTLNKVFASQWLNHRQVVCGTKCNTLFVVDVQTSQITKIPILKDREPGGVTQQGCGIHAIELNPSRTLLATGGDNPNSLAIYRLPTLDPVCVGDDGHKDWIFSIAWISDTMAVSGSRDGSMGLWEVTDDVLTKSDARHNVSRVPVYAHITHKALKDIPKEDTNPDNCKVRALAFNNKNKELGAVSLDGYFHLWKAENTLSKLLSTKLPYCRENVCLAYGSEWSVYAVGSQAHVSFLDPRQPSYNVKSVCSRERGSGIRSVSFYEHIITVGTGQGSLLFYDIRAQRFLEERLSACYGSKPRLAGENLKLTTGKGWLNHDETWRNYFSDIDFFPNAVYTHCYDSSGTKLFVAGGPLPSGLHGNYAGLWS.

Over residues 1-12 (MARKVVSRKRKA) the composition is skewed to basic residues. Residues 1–34 (MARKVVSRKRKAPASPGAGSDAQGPQFGWDHSLH) form a disordered region. Positions 1-38 (MARKVVSRKRKAPASPGAGSDAQGPQFGWDHSLHKRKR) are required for nuclear location and interaction with MOV10. Phosphoserine is present on Ser-15. 6 WD repeats span residues 81-122 (EREF…TSQI), 123-175 (TKIP…TLDP), 176-242 (VCVG…ALKD), 243-286 (IPKE…NTLS), 287-331 (KLLS…SYNV), and 332-366 (KSVCSRERGSGIRSVSFYEHIITVGTGQGSLLFYD).

It belongs to the WD repeat DCAF12 family. Component of the DCX(DCAF12) E3 ubiquitin ligase complex, at least composed of CUL4 (CUL4A or CUL4B), DDB1, DCAF12 and RBX1. In terms of tissue distribution, highly expressed in lung cancer tissues and some cancer cell lines. Restricted expression in normal testis.

The protein resides in the cytoplasm. It localises to the cytoskeleton. The protein localises to the microtubule organizing center. It is found in the centrosome. Its subcellular location is the nucleus. It functions in the pathway protein modification; protein ubiquitination. Substrate-recognition component of a DCX (DDB1-CUL4-X-box) E3 ubiquitin-protein ligase complex of the DesCEND (destruction via C-end degrons) pathway, which recognizes a C-degron located at the extreme C terminus of target proteins, leading to their ubiquitination and degradation. The C-degron recognized by the DesCEND pathway is usually a motif of less than ten residues and can be present in full-length proteins, truncated proteins or proteolytically cleaved forms. The DCX(DCAF12) complex specifically recognizes proteins with a diglutamate (Glu-Glu) at the C-terminus, such as MAGEA3, MAGEA6 and CCT5, leading to their ubiquitination and degradation. Ubiquitination of MAGEA3, MAGEA6 by DCX(DCAF12) complex is required for starvation-induced autophagy. Also directly recognizes the C-terminal glutamate-leucine (Glu-Leu) degron as an alternative degron in proteins such as MOV10, leading to their ubiquitination and degradation. Controls the protein level of MOV10 during spermatogenesis and in T cells, especially after their activation. In Homo sapiens (Human), this protein is DDB1- and CUL4-associated factor 12.